The primary structure comprises 426 residues: Enolase (426 aa).

Position 163 (Q163) interacts with (2R)-2-phosphoglycerate. The active-site Proton donor is E205. Residues D242, E285, and D312 each contribute to the Mg(2+) site. 4 residues coordinate (2R)-2-phosphoglycerate: K337, R366, S367, and K388. The active-site Proton acceptor is K337.

The protein belongs to the enolase family. Mg(2+) serves as cofactor.

The protein resides in the cytoplasm. Its subcellular location is the secreted. The protein localises to the cell surface. The enzyme catalyses (2R)-2-phosphoglycerate = phosphoenolpyruvate + H2O. Its pathway is carbohydrate degradation; glycolysis; pyruvate from D-glyceraldehyde 3-phosphate: step 4/5. Catalyzes the reversible conversion of 2-phosphoglycerate (2-PG) into phosphoenolpyruvate (PEP). It is essential for the degradation of carbohydrates via glycolysis. The polypeptide is Enolase (Nitrobacter winogradskyi (strain ATCC 25391 / DSM 10237 / CIP 104748 / NCIMB 11846 / Nb-255)).